A 434-amino-acid chain; its full sequence is Putative magnesium transporter MRS2-D (434 aa).

Disordered regions lie at residues 126 to 171 (AASP…DGEA) and 279 to 311 (EASELEDHSSRDEEGVEGGGGGDGDDETIAGGG). The span at 279 to 291 (EASELEDHSSRDE) shows a compositional bias: basic and acidic residues. Helical transmembrane passes span 367–387 (GILLSTGTLVSSCAIAVTGVF) and 405–425 (FPCAAAGIVAGSLALYLAALL).

Belongs to the CorA metal ion transporter (MIT) (TC 1.A.35.5) family.

The protein resides in the membrane. Putative magnesium transporter. In Oryza sativa subsp. japonica (Rice), this protein is Putative magnesium transporter MRS2-D (MRS2-D).